Consider the following 360-residue polypeptide: MRVFNFSAGPAAMPEEVLRQAADEMLDWHGSGMSVMEMSHRGKEFMSIHEAALTDLRDLLGVPASHRILFLQGGGIAENAIVPMNLLGARNTADFVVTGSWSQKSFGEAKKFCTPHLAASGKTENGFTRAPTRAEWQLSDDPAYVHLCTNETIDGVETFEIPDLGDVPLVADVSSHILSRPMDVAKYGVLFGGAQKNIGMAGVTVVIVREDLLDRALSICPSAFEWKTIAANNSLYNTPPTYAIYIAGLVFQWLKRQGGLEAIEARNIEKSKLLYDTIDASSFYLNKVEPAARSRMNVPFFLADETRNEDFLAGAKARGLLQLKGHKSVGGMRASIYNAVPLEGVKALVEYMKDFEQRDA.

An L-glutamate-binding site is contributed by Arg41. Trp101, Thr152, Asp172, and Gln195 together coordinate pyridoxal 5'-phosphate. Lys196 bears the N6-(pyridoxal phosphate)lysine mark. Residue 237–238 coordinates pyridoxal 5'-phosphate; it reads NT.

This sequence belongs to the class-V pyridoxal-phosphate-dependent aminotransferase family. SerC subfamily. Homodimer. Requires pyridoxal 5'-phosphate as cofactor.

The protein localises to the cytoplasm. It catalyses the reaction O-phospho-L-serine + 2-oxoglutarate = 3-phosphooxypyruvate + L-glutamate. It carries out the reaction 4-(phosphooxy)-L-threonine + 2-oxoglutarate = (R)-3-hydroxy-2-oxo-4-phosphooxybutanoate + L-glutamate. It functions in the pathway amino-acid biosynthesis; L-serine biosynthesis; L-serine from 3-phospho-D-glycerate: step 2/3. Its pathway is cofactor biosynthesis; pyridoxine 5'-phosphate biosynthesis; pyridoxine 5'-phosphate from D-erythrose 4-phosphate: step 3/5. Its function is as follows. Catalyzes the reversible conversion of 3-phosphohydroxypyruvate to phosphoserine and of 3-hydroxy-2-oxo-4-phosphonooxybutanoate to phosphohydroxythreonine. This Burkholderia cenocepacia (strain ATCC BAA-245 / DSM 16553 / LMG 16656 / NCTC 13227 / J2315 / CF5610) (Burkholderia cepacia (strain J2315)) protein is Phosphoserine aminotransferase.